We begin with the raw amino-acid sequence, 305 residues long: Protoheme IX farnesyltransferase (305 aa).

9 consecutive transmembrane segments (helical) span residues 28–48 (IIEL…QGVP), 52–72 (LVLL…ALNM), 101–121 (LAFG…TVNW), 122–142 (LSAW…TMIL), 149–169 (NIVW…SSVT), 174–194 (WAPV…YWPL), 218–238 (VVAR…LLLT), 240–260 (LGYT…FWLW), and 283–303 (LFHW…VDPF).

It belongs to the UbiA prenyltransferase family. Protoheme IX farnesyltransferase subfamily.

It is found in the cell membrane. It carries out the reaction heme b + (2E,6E)-farnesyl diphosphate + H2O = Fe(II)-heme o + diphosphate. The protein operates within porphyrin-containing compound metabolism; heme O biosynthesis; heme O from protoheme: step 1/1. Functionally, converts heme B (protoheme IX) to heme O by substitution of the vinyl group on carbon 2 of heme B porphyrin ring with a hydroxyethyl farnesyl side group. This Streptomyces avermitilis (strain ATCC 31267 / DSM 46492 / JCM 5070 / NBRC 14893 / NCIMB 12804 / NRRL 8165 / MA-4680) protein is Protoheme IX farnesyltransferase.